Reading from the N-terminus, the 90-residue chain is Small ribosomal subunit protein uS15c (90 aa).

This sequence belongs to the universal ribosomal protein uS15 family. Part of the 30S ribosomal subunit.

It localises to the plastid. The protein localises to the chloroplast. The sequence is that of Small ribosomal subunit protein uS15c (rps15) from Dioscorea elephantipes (Elephant's foot yam).